Here is a 752-residue protein sequence, read N- to C-terminus: Multifunctional tryptophan biosynthesis protein (752 aa).

One can recognise a Glutamine amidotransferase type-1 domain in the interval 3 to 202; it reads FTLLIDNYDS…IQMKGGKWGG (200 aa). Residue 58–60 participates in L-glutamine binding; the sequence is GPG. Catalysis depends on cysteine 86, which acts as the Nucleophile; for GATase activity. Position 136-137 (136-137) interacts with L-glutamine; that stretch reads SL. Residues histidine 176 and glutamate 178 each act as for GATase activity in the active site. The indole-3-glycerol phosphate synthase stretch occupies residues 231–495; sequence ILNRIHAQRL…DTKAFLRSLI (265 aa). Positions 509 to 752 are N-(5'-phosphoribosyl)anthranilate isomerase; it reads LVKICGIRST…VEAFVKAVRG (244 aa).

The enzyme catalyses N-(5-phospho-beta-D-ribosyl)anthranilate = 1-(2-carboxyphenylamino)-1-deoxy-D-ribulose 5-phosphate. It catalyses the reaction 1-(2-carboxyphenylamino)-1-deoxy-D-ribulose 5-phosphate + H(+) = (1S,2R)-1-C-(indol-3-yl)glycerol 3-phosphate + CO2 + H2O. It carries out the reaction chorismate + L-glutamine = anthranilate + pyruvate + L-glutamate + H(+). It functions in the pathway amino-acid biosynthesis; L-tryptophan biosynthesis; L-tryptophan from chorismate: step 1/5. The protein operates within amino-acid biosynthesis; L-tryptophan biosynthesis; L-tryptophan from chorismate: step 3/5. Its pathway is amino-acid biosynthesis; L-tryptophan biosynthesis; L-tryptophan from chorismate: step 4/5. Its function is as follows. Trifunctional enzyme bearing the Gln amidotransferase (GATase) domain of anthranilate synthase, indole-glycerolphosphate synthase, and phosphoribosylanthranilate isomerase activities. The sequence is that of Multifunctional tryptophan biosynthesis protein (TRP1) from Cryptococcus neoformans var. neoformans serotype D (strain B-3501A) (Filobasidiella neoformans).